Reading from the N-terminus, the 198-residue chain is Recombination protein RecR (198 aa).

Residues 58–73 (CSVCGNFTDTDPCAIC) form a C4-type zinc finger. Residues 81 to 175 (DIICVVEQPK…KVTRIAAGIP (95 aa)) form the Toprim domain.

The protein belongs to the RecR family.

Functionally, may play a role in DNA repair. It seems to be involved in an RecBC-independent recombinational process of DNA repair. It may act with RecF and RecO. The protein is Recombination protein RecR of Clostridium perfringens (strain ATCC 13124 / DSM 756 / JCM 1290 / NCIMB 6125 / NCTC 8237 / Type A).